The sequence spans 221 residues: Protein N-terminal glutamine amidohydrolase (221 aa).

At Ser-2 the chain carries N-acetylserine. Active-site residues include Cys-23, His-79, and Asp-97.

Belongs to the NTAQ1 family. As to quaternary structure, monomer.

It carries out the reaction N-terminal L-glutaminyl-[protein] + H2O = N-terminal L-glutamyl-[protein] + NH4(+). Functionally, mediates the side-chain deamidation of N-terminal glutamine residues to glutamate, an important step in N-end rule pathway of protein degradation. Conversion of the resulting N-terminal glutamine to glutamate renders the protein susceptible to arginylation, polyubiquitination and degradation as specified by the N-end rule. Does not act on substrates with internal or C-terminal glutamine and does not act on non-glutamine residues in any position. Involved in immune response. Controls the expression of specific defense-response genes, activates the synthesis pathway for the phytoalexin camalexin, and influences basal resistance to the hemibiotroph pathogen Pseudomonas syringae pv tomato (Pst). The chain is Protein N-terminal glutamine amidohydrolase from Arabidopsis thaliana (Mouse-ear cress).